The primary structure comprises 137 residues: uncharacterized protein (137 aa).

The 78-residue stretch at 58–135 (VHVVAKTVRP…EVNLQMFLMN (78 aa)) folds into the Ubiquitin-like domain.

Its subcellular location is the cytoplasm. The protein resides in the nucleus. This is an uncharacterized protein from Schizosaccharomyces pombe (strain 972 / ATCC 24843) (Fission yeast).